Reading from the N-terminus, the 375-residue chain is Myb family transcription factor PHL5 (375 aa).

Residues 159–171 (TSSQHQPKQSHPR) show a composition bias toward polar residues. The disordered stretch occupies residues 159–178 (TSSQHQPKQSHPRFSSPPSF). Residues 189–249 (CVNKTRIRWT…HLQKYRIAKY (61 aa)) enclose the HTH myb-type domain. Positions 220–245 (PKAILKRMDSDGLTIFHVKSHLQKYR) form a DNA-binding region, H-T-H motif. Residues 279–299 (KEALQLQLDVQRHLHEQLEIQ) adopt a coiled-coil conformation. Positions 292–297 (LHEQLE) match the LHEQLE motif.

It belongs to the MYB-CC family.

The protein resides in the nucleus. In Arabidopsis thaliana (Mouse-ear cress), this protein is Myb family transcription factor PHL5.